Consider the following 116-residue polypeptide: MASIIFTPKDIFDQDFKTAVRGYSKQEVDEFLDDVIKDYETYSALVKELREENSRLKQELSKRMQEAPNSTASQVHQSFGDTTQTTITNFDILKRLSRLEKEVFGKQIQASELNQL.

Positions 32–69 form a coiled coil; that stretch reads LDDVIKDYETYSALVKELREENSRLKQELSKRMQEAPN. The disordered stretch occupies residues 57 to 78; sequence KQELSKRMQEAPNSTASQVHQS. Residues 67–78 show a composition bias toward polar residues; that stretch reads APNSTASQVHQS.

The protein belongs to the GpsB family. In terms of assembly, forms polymers through the coiled coil domains. Interacts with PBP1, MreC and EzrA.

The protein localises to the cytoplasm. Divisome component that associates with the complex late in its assembly, after the Z-ring is formed, and is dependent on DivIC and PBP2B for its recruitment to the divisome. Together with EzrA, is a key component of the system that regulates PBP1 localization during cell cycle progression. Its main role could be the removal of PBP1 from the cell pole after pole maturation is completed. Also contributes to the recruitment of PBP1 to the division complex. Not essential for septum formation. This Streptococcus gordonii (strain Challis / ATCC 35105 / BCRC 15272 / CH1 / DL1 / V288) protein is Cell cycle protein GpsB.